The sequence spans 307 residues: Homoserine O-acetyltransferase (307 aa).

Cys142 serves as the catalytic Acyl-thioester intermediate. Substrate is bound by residues Lys163 and Ser192. His235 acts as the Proton acceptor in catalysis. Glu237 is a catalytic residue. Arg249 contributes to the substrate binding site.

This sequence belongs to the MetA family.

Its subcellular location is the cytoplasm. It catalyses the reaction L-homoserine + acetyl-CoA = O-acetyl-L-homoserine + CoA. It participates in amino-acid biosynthesis; L-methionine biosynthesis via de novo pathway; O-acetyl-L-homoserine from L-homoserine: step 1/1. Its function is as follows. Transfers an acetyl group from acetyl-CoA to L-homoserine, forming acetyl-L-homoserine. This Rhizobium johnstonii (strain DSM 114642 / LMG 32736 / 3841) (Rhizobium leguminosarum bv. viciae) protein is Homoserine O-acetyltransferase.